We begin with the raw amino-acid sequence, 250 residues long: Beta-crystallin B1 (250 aa).

The segment covering 1-13 (MSQAAKASATTAV) has biased composition (polar residues). The interval 1–49 (MSQAAKASATTAVNPGPDGKGKGAPSTGPAPAPGPTPVPASVPRPAAKV) is disordered. Serine 2 bears the N-acetylserine mark. Residues 2 to 56 (SQAAKASATTAVNPGPDGKGKGAPSTGPAPAPGPTPVPASVPRPAAKVGDLPPGS) form an N-terminal arm region. A compositionally biased stretch (pro residues) spans 28–42 (GPAPAPGPTPVPASV). Beta/gamma crystallin 'Greek key' domains lie at 57 to 96 (YRLI…IVVS) and 97 to 141 (GPWV…RPIR). The connecting peptide stretch occupies residues 142-146 (MDSQE). Beta/gamma crystallin 'Greek key' domains follow at residues 147 to 188 (HKIC…TVSG) and 189 to 231 (GTWV…RRLR). The tract at residues 233–250 (RQWHQEGCFPVLTAEPPK) is C-terminal arm.

The protein belongs to the beta/gamma-crystallin family. As to quaternary structure, homo/heterodimer, or complexes of higher-order. The structure of beta-crystallin oligomers seems to be stabilized through interactions between the N-terminal arms. Post-translationally, specific cleavages in the N-terminal arm occur during lens maturation and give rise to truncated forms, leading to impaired oligomerization and protein insolubilization. The protease responsible for this partial degradation could be calpain II.

Functionally, crystallins are the dominant structural components of the vertebrate eye lens. The chain is Beta-crystallin B1 (Crybb1) from Mus musculus (Mouse).